We begin with the raw amino-acid sequence, 339 residues long: Bifunctional protein GlmU (339 aa).

Residues 1 to 234 (MKKENPLAIV…PKDVLGVNSR (234 aa)) form a pyrophosphorylase region. UDP-N-acetyl-alpha-D-glucosamine is bound by residues 12–15 (LAAG), lysine 26, glutamine 77, and 82–83 (GT). Aspartate 107 contacts Mg(2+). Positions 144, 159, 174, and 232 each coordinate UDP-N-acetyl-alpha-D-glucosamine. Position 232 (asparagine 232) interacts with Mg(2+). Positions 235–255 (IELAMADEELRMRRNREVMLT) are linker. The tract at residues 256–339 (GVSMILPATI…KIPAQQREEE (84 aa)) is N-acetyltransferase.

This sequence belongs to the N-acetylglucosamine-1-phosphate uridyltransferase family. Homotrimer. The cofactor is Mg(2+).

The protein localises to the cytoplasm. The enzyme catalyses alpha-D-glucosamine 1-phosphate + acetyl-CoA = N-acetyl-alpha-D-glucosamine 1-phosphate + CoA + H(+). It catalyses the reaction N-acetyl-alpha-D-glucosamine 1-phosphate + UTP + H(+) = UDP-N-acetyl-alpha-D-glucosamine + diphosphate. It functions in the pathway nucleotide-sugar biosynthesis; UDP-N-acetyl-alpha-D-glucosamine biosynthesis; N-acetyl-alpha-D-glucosamine 1-phosphate from alpha-D-glucosamine 6-phosphate (route II): step 2/2. It participates in nucleotide-sugar biosynthesis; UDP-N-acetyl-alpha-D-glucosamine biosynthesis; UDP-N-acetyl-alpha-D-glucosamine from N-acetyl-alpha-D-glucosamine 1-phosphate: step 1/1. The protein operates within bacterial outer membrane biogenesis; LPS lipid A biosynthesis. Functionally, catalyzes the last two sequential reactions in the de novo biosynthetic pathway for UDP-N-acetylglucosamine (UDP-GlcNAc). The C-terminal domain catalyzes the transfer of acetyl group from acetyl coenzyme A to glucosamine-1-phosphate (GlcN-1-P) to produce N-acetylglucosamine-1-phosphate (GlcNAc-1-P), which is converted into UDP-GlcNAc by the transfer of uridine 5-monophosphate (from uridine 5-triphosphate), a reaction catalyzed by the N-terminal domain. In Desulfotalea psychrophila (strain LSv54 / DSM 12343), this protein is Bifunctional protein GlmU (glmU).